We begin with the raw amino-acid sequence, 424 residues long: Serine--tRNA ligase (424 aa).

An L-serine-binding site is contributed by 230–232 (TAE). Residue 261–263 (RSE) participates in ATP binding. Glu-284 contributes to the L-serine binding site. Residue 348–351 (EISS) participates in ATP binding. Ser-384 provides a ligand contact to L-serine.

The protein belongs to the class-II aminoacyl-tRNA synthetase family. Type-1 seryl-tRNA synthetase subfamily. Homodimer. The tRNA molecule binds across the dimer.

It is found in the cytoplasm. The catalysed reaction is tRNA(Ser) + L-serine + ATP = L-seryl-tRNA(Ser) + AMP + diphosphate + H(+). It carries out the reaction tRNA(Sec) + L-serine + ATP = L-seryl-tRNA(Sec) + AMP + diphosphate + H(+). It functions in the pathway aminoacyl-tRNA biosynthesis; selenocysteinyl-tRNA(Sec) biosynthesis; L-seryl-tRNA(Sec) from L-serine and tRNA(Sec): step 1/1. Catalyzes the attachment of serine to tRNA(Ser). Is also able to aminoacylate tRNA(Sec) with serine, to form the misacylated tRNA L-seryl-tRNA(Sec), which will be further converted into selenocysteinyl-tRNA(Sec). The chain is Serine--tRNA ligase from Streptococcus pneumoniae serotype 2 (strain D39 / NCTC 7466).